The chain runs to 1460 residues: Nonribosomal peptide synthetase 6 (1460 aa).

The interval 63 to 468 (EQAALHPEKI…GRQDQQVKLR (406 aa)) is adenylation. One can recognise a Carrier 1 domain in the interval 600 to 675 (EPTTEMEIKL…AMATKIKPLS (76 aa)). Ser636 carries the O-(pantetheine 4'-phosphoryl)serine modification. The interval 712–1135 (VQDVYPCTPL…AVLDPSEAQD (424 aa)) is condensation. 2 consecutive Carrier domains span residues 1168–1241 (SPNE…GNEK) and 1236–1312 (SIGN…EETD). 2 positions are modified to O-(pantetheine 4'-phosphoryl)serine: Ser1202 and Ser1273. The disordered stretch occupies residues 1303-1324 (ELASSAEETDSPQTETNSNAPY). The span at 1313-1322 (SPQTETNSNA) shows a compositional bias: polar residues.

Belongs to the NRP synthetase family.

The protein operates within siderophore biosynthesis. In terms of biological role, NRPS involved in extracellular coprogen-type siderophores biosynthesis. The role of extracellular siderophores in fungal virulence to plants is to supply iron to the fungus during plant infection, but not to act as phytotoxins, depriving their hosts of iron. This Alternaria brassicicola (Dark leaf spot agent) protein is Nonribosomal peptide synthetase 6.